A 2172-amino-acid chain; its full sequence is DExH-box ATP-dependent RNA helicase DExH13 (2172 aa).

A disordered region spans residues 20 to 83; it reads YKVNSSLVLN…KSKKKKERCD (64 aa). Basic and acidic residues predominate over residues 30 to 73; that stretch reads SDERRRDTHESSGEPESLRGRIDPKSFGDRVVRGRPHELDERLN. A Helicase ATP-binding 1 domain is found at 515-698; the sequence is GTALFKADNI…FLRVDLKNGL (184 aa). Residue 528–535 participates in ATP binding; sequence APTGAGKT. A DEIH box motif is present at residues 640–643; that stretch reads DEIH. Residues 742–946 form the Helicase C-terminal 1 domain; that stretch reads GKHQVLIFVH…NAREACHWLG (205 aa). In terms of domain architecture, SEC63 1 spans 1007 to 1308; that stretch reads TDLGRIASYY…KWLDSPTVLP (302 aa). The Helicase ATP-binding 2 domain occupies 1361–1538; the sequence is TVLYNTSDNV…WIGASSCGVF (178 aa). Position 1374–1381 (1374–1381) interacts with ATP; the sequence is APTGSGKT. The DELH box signature appears at 1480–1483; the sequence is DELH. The Helicase C-terminal 2 domain occupies 1575–1772; that stretch reads AIVQHAKNKK…NFNAEVVARV (198 aa). Positions 1840–2157 constitute an SEC63 2 domain; it reads PLNLGMIASY…YLGCDQEYSF (318 aa).

Its subcellular location is the nucleus. It carries out the reaction ATP + H2O = ADP + phosphate + H(+). In terms of biological role, RNA helicase that plays an essential role in pre-mRNA splicing as component of the U5 snRNP and U4/U6-U5 tri-snRNP complexes. Involved in spliceosome assembly, activation and disassembly. The sequence is that of DExH-box ATP-dependent RNA helicase DExH13 from Arabidopsis thaliana (Mouse-ear cress).